The primary structure comprises 538 residues: Tetracenomycin C resistance and export protein (538 aa).

14 helical membrane-spanning segments follow: residues 28-48 (LLAVAVGVMMVALDSTIVAIA), 65-85 (WITNGYLLALAVSLITAGKLG), 100-120 (GFAVTSAAIGLSGSVAAIVVF), 126-146 (LFGALMQPSALGLLRVTFPPG), 154-174 (IWSGVVGASTAAGPIIGGLLV), 181-201 (AVFFINVPVGLAALVAGLVIL), 213-233 (FDVSGIVLLSGAMFCLVWGLI), 239-259 (GWGDLRTLGFLAAAVLAFAGF), 286-306 (VLMVLMAFSFIGGLFFVTFYL), 319-339 (VHLLPLTGMMIVGAPVSGIVI), 342-362 (FGPGGPLVVGMLLTAASLWGM), 371-391 (MGITSLWFVLLGLGLAPVMVG), 413-433 (QSAMQVGGSLGTAVLGVLMAS), and 494-514 (MGLAFTVAGAVALVAAAVALF).

The protein belongs to the major facilitator superfamily. EmrB family.

Its subcellular location is the cell membrane. Its pathway is antibiotic biosynthesis; tetracenomycin C biosynthesis. Its function is as follows. Resistance to tetracenomycin C by an active tetracenomycin C efflux system which is probably energized by transmembrane electrochemical gradients. This chain is Tetracenomycin C resistance and export protein (tcmA), found in Streptomyces glaucescens.